Consider the following 154-residue polypeptide: Troponin C, isoform 1 (154 aa).

4 EF-hand domains span residues Glu8–Gln43, Leu44–Glu79, Ala84–Lys119, and Leu120–Asp154. Asp57, Asp59, Ser61, Gln63, and Glu68 together coordinate Ca(2+). Residues Asp133, Asp135, Ser137, Thr139, and Glu144 each contribute to the Ca(2+) site.

It belongs to the troponin C family. As to expression, present only in adult muscles.

This chain is Troponin C, isoform 1 (TpnC41C), found in Drosophila melanogaster (Fruit fly).